A 7152-amino-acid chain; its full sequence is MIKTSKYGLGFKWAPEFRWLLPDAAEELASPMKSDEGGLCPSTGQAMESVGFVYDNHVKIDCRCILGQEWHVQSNLIRDIFVHEDLHVVEVLTKTAVKSGTAILIKSPLHSLGGFPKGYVMGLFRSYKTKRYVVHHLSMTTSTTNFGEDFLGWIVPFGFMPSYVHKWFQFCRLYIEESDLIISNFKFDDYDFSVEDAYAEVHAEPKGKYSQKAYALLRQYRGIKPVLFVDQYGCDYSGKLADCLQAYGHYSLQDMRQKQSVWLANCDFDIVVAWHVVRDSRFVMRLQTIATICGIKYVAQPTEDVVDGAVVIREPVHLLSADAIVLKLPSLMKVMTHMDDFSIKSIYNVDLCDCGFVMQYGYVDCFNDNCDFYGWVSGNMMDGFSCPLCCTVYDSSEVKAQSSGVIPENPVLFTNSTDTVNPDSFNLYGYSVTPFGSCIYWSPRPGLWIPIIKSSVKSYDDLVYSGVVGCKSIVKETALITHALYLDYVQCKCGNLEQNHILGVNNSWCRQLLLNRGDYNMLLKNIDLFVKRRADFACKFAVCGDGFVPFLLDGLIPRSYYLIQSGIFFTSLMSQFSQEVSDMCLKMCILFMDRVSVATFYIEHYVNRLVTQFKLLGTTLVNKMVNWFNTMLDASAPATGWLLYQLLNGLFVVSQANFNFVALIPDYAKILVNKFYTFFKLLLECVTVDVLKDMPVLKTINGLVCIVGNKFYNVSTGLIPGFVLPCNAQEQQIYFFEGVAESVIVEDDVIENVKSSLSSYEYCQPPKSVEKICIIDNMYMGKCGDKFFPIVMNDKNICLLDQAWRFPCAGRKVNFNEKPVVMEIPSLMTVKVMFDLDSTFDDILGKVCSEFEVEKGVTVDDFVAVVCDAIENALNSCKDHPVVGYQVRAFLNKLNENVVYLFDEAGDEAMASRMYCTFAIEDVEDVISSEAVEDTIDGVVEDTINDDEDVVTGDNDDEDVVTGDNDDEDVVTGDNDDEDVVTGDNDDEDVVTGDNDDEDVVTGDNDDEDVVTGDNDDEDVVTGDNDDEDVVTGDNDDEDVVTGDNDDEDVVTGDNDDEEIVTGDNDDQIVVTGDDVDDIESVYDFDTYKALLVFNDVYNDALFVSYGSSVETETYFKVNGLWSPTITHTNCWLRSVLLVMQKLPFKFKDLAIENMWLSYKVGYNQSFVDYLLTTIPKAIVLPQGGYVADFAYWFLNQFDINAYANWCCLKCGFSFDLNGLDAVFFYGDIVSHVCKCGHNMTLIAADLPCTLHFSLFDDNFCAFCTPKKIFIAACAVDVNVCHSVAVIGDEQIDGKFVTKFSGDKFDFIVGYGMSFSMSSFELAQLYGLCITPNVCFVKGDIINVARLVKADVIVNPANGHMLHGGGVAKAIAVAAGKKFSKETAAMVKSKGVCQVGDCYVSTGGKLCKTILNIVGPDARQDGRQSYVLLARAYKHLNNYDCCLSTLISAGIFSVPADVSLTYLLGVVDKQVILVSNNKEDFDIIQKCQITSVVGTKALAVRLTANVGRVIKFETDAYKLFLSGDDCFVSNSSVIQEVLLLRHDIQLNNDVRDYLLSKMTSLPKDWRLINKFDVINGVKTVKYFECPNSIYICSQGKDFGYVCDGSFYKATVNQVCVLLAKKIDVLLTVDGVNFKSISLTVGEVFGKILGNVFCDGIDVTKLKCSDFYADKILYQYENLSLADISAVQSSFGFDQQQLLAYYNFLTVCKWSVVVNGPFFSFEQSHNNCYVNVACLMLQHINLKFNKWQWQEAWYEFRAGRPHRLVALVLAKGHFKFDEPSDATDFIRVVLKQADLSGAICELELICDCGIKQESRVGVDAVMHFGTLAKTDLFNGYKIGCNCAGRIVHCTKLNVPFLICSNTPLSKDLPDDVVAANMFMGVGVGHYTHLKCGSPYQHYDACSVKKYTGVSGCLTDCLYLKNLTQTFTSMLTNYFLDDVEMVAYNPDLSQYYCDNGKYYTKPIIKAQFKPFAKVDGVYTNFKLVGHDICAQLNDKLGFNVDLPFVEYKVTVWPVATGDVVLASDDLYVKRYFKGCETFGKPVIWLCHDEASLNSLTYFNKPSFKSENRYSVLSVDSVSEESQGNVVTSVMESQISTKEVKLKGVRKTVKIEDAIIVNDENSSIKVVKSLSLVDVWDMYLTGCDYVVWVANELSRLVKSPTVREYIRYGIKPITIPIDLLCLRDDNQTLLVPKIFKARAIEFYGFLKWLFIYVFSLLHFTNDKTIFYTTEIASKFTFNLFCLALKNAFQTFRWSIFIKGFLVVATVFLFWFNFLYINVIFSDFYLPNISVFPIFVGRIVMWIKATFGLVTICDFYSKLGVGFTSHFCNGSFICELCYSGFDMLDTYAAIDFVQYEVDRRVLFDYVSLVKLIVELVIGYSLYTVWFYPLFCLIGLQLFTTWLPDLFMLETMHWLIRFIVFVANMLPAFVLLRFYIVVTAMYKVVGFIRHIVYGCNKAGCLFCYKRNCSVRVKCSTIVGGVIRYYDITANGGTGFCVKHQWNCFNCHSFKPGNTFITVEAAIELSKELKRPVNPTDASHYVVTDIKQVGCMMRLFYDRDGQRVYDDVDASLFVDINNLLHSKVKVVPNLYVVVVESDADRANFLNAVVFYAQSLYRPILLVDKKLITTACNGISVTQTMFDVYVDTFMSHFDVDRKSFNNFVNIAHASLREGVQLEKVLDTFVGCVRKCCSIDSDVETRFITKSMISAVAAGLEFTDENYNNLVPTYLKSDNIVAADLGVLIQNGAKHVQGNVAKAANISCIWFIDTFNQLTADLQHKLKKACVKTGLKLKLTFNKQEASVPILTTPFSLKGGVVLSNLLYILFFISLICFILLWALLPTYSVYKSDIHLPAYASFKVIDNGVVRDISVNDLCFANKFFQFDQWYESTFGSFYYHNSMDCPIVVAVMDEDIGSTMFNVPTKVLRHGFHVLHFLTYAFASDSVQCYTPHIQISYNDFYASGCVLSSLCTMFKRGDGTPHPYCYSDGVMKNASLYTSLVPHTRYSLANSNGFIRFPDVISEGIVRIVRTRSMTYCRVGACEYAEEGICFNFNSSWVLNNDYYRSMPGTFCGRDLFDLFYQFFSSLIRPIDFFSLTASSIFGAILAIVVVLVFYYLIKLKRAFGDYTSVVVINVIVWCINFLMLFVFQVYPICACVYACFYFYVTLYFPSEISVIMHLQWIVMYGAIMPFWFCVTYVAMVIANHVLWLFSYCRKIGVNVCNDSTFEETSLTTFMITKDSYCRLKNSVSDVAYNRYLSLYNKYRYYSGKMDTAAYREAACSQLAKAMETFNHNNGNDVLYQPPTASVSTSFLQSGIVKMVSPTSKIEPCIVSVTYGSMTLNGLWLDDKVYCPRHVICLSSNMNEPDYSALLCRVTLGDFTIMSGRMSLTVVSYQMQGCQLVLTVSLQNPYTPKYTFGVVKPGETFTVLAAYNGRPQGAFHVTMRSSYTIKGSFLCGSCGSVGYVLTGDSVKFVYMHQLELSTGCHTGTDFTGNFYGPYRDAQVVQLPVKDYVQTVNVIAWLYAAILNNCAWFVQNDVCSIEDFNVWAMTNGFSQVKADLVLDALASMTGVSIETLLAAIKRLYMGFQGRQILGSCTFEDELAPSDVYQQLAGVKLQSKTKRFIKETIYWILISTFLFSCIISAFVKWTIFMYINTHMIGVTLCVLCFVSFMMLLVKHKHFYLTMYIIPVLCTLFYVNYLVVYKEGFRGLTYVWLSYFVPAVNFTYVYEVFYGCILCVFAIFITMHSINHDIFSLMFLVGRIVTLISMWYFGSNLEEDVLLFITAFLGTYTWTTILSLAIAKIVANWLSVNIFYFTDVPYIKLILLSYLFIGYILSCYWGFFSLLNSVFRMPMGVYNYKISVQELRYMNANGLRPPRNSFEAILLNLKLLGIGGVPVIEVSQIQSKLTDVKCANVVLLNCLQHLHVASNSRLWQYCSILHNEILSTSDLSVAFDKLAQLLIVLFANPAAVDTKCLASIDEVSDDYVQDSTVLQALQSEFVNMASFVEYEVAKKNLADAKNSGSVNQQQIKQLEKACNIAKSVYERDKAVARKLERMADLALTNMYKEARINDKKSKVVSALQTMLFSMVRKLDNQALNSILDNAVKGCVPLNAIPALAANTLTIIIPDKQVFDKVVDNVYVAYAGSVWHIQTVQDADGINKQLTDISVDSNWPLVIIANRYNEVANAVMQNNELMPHKLKIQVVNSGSDMNCNIPTQCYYNNGSSGRIVYAVLSDVDGLKYTKIIKDDGNCVVLELDPPCKFSIQDVKGLKIKYLYFIKGCNTLARGWVVGTLSSTIRLQAGVATEYAANSSILSLCAFSVDPKKTYLDYIQQGGVPIINCVKMLCDHAGTGMAITIKPEATINQDSYGGASVCIYCRARVEHPDVDGLCKLRGKFVQVPLGIKDPILYVLTHDVCQVCGFWRDGSCSCVGSGVAVQSKDLNFLNRVRGTSVNARLVPCASGLSTDVQLRAFDICNTNRAGIGLYYKVNCCRFQRIDDDGNKLDKFFVVKRTNLEVYNKEKTYYELTKSCGVVAEHDFFTFDIDGSRVPHIVRKNLSKYTMLDLCYALRHFDCNDCSVLCEILCEYADCKESYFSKKDWYDFVENPDIINIYKKLGPIFNRALLNTVSFADTLVKVGLVGVLTLDNQDLYGQWYDFGDFIQTAPGFGVAVADSYYSYMMPMLTMCHVLDCELFVNDSYRQFDLVQYDFTDYKLELFNKYFKYWGMKYHPNTVDCDNDRCIIHCANFNILFSMVLPNTCFGPLVRQIFVDGVPFVVSIGYHYKELGVVMNLDVDTHRYRLSLKDLLLYAADPAMHVASASALLDLRTCCFSVAAITSGIKFQTVKPGNFNQDFYEFVKSKGLFKEGSTVDLKHFFFTQDGNAAITDYNYYKYNLPTMVDIKQLLFVLEVVYKYFEIYDGGCIPASQVIVNNYDKSAGYPFNKFGKARLYYEALSFEEQNEIYAYTKRNVLPTLTQMNLKYAISAKNRARTVAGVSILSTMTGRMFHQKCLKSIAATRGVPVVIGTTKFYGGWDDMLRHLIKDVDNPVLMGWDYPKCDRAMPNILRIVSSLVLARKHEFCCSHGDRFYRLANECAQVLSEIVMCGGCYYVKPGGTSSGDATTAFANSVFNICQAVTANVCSLMACNGHKIEDLSIRNLQKRLYSNVYRTDYVDYTFVNEYYEFLCKHFSMMILSDDGVVCYNSDYASKGYIANISVFQQVLYYQNNVFMSESKCWVENDITNGPHEFCSQHTMLVKIDGDYVYLPYPDPSRILGAGCFVDDLLKTDSVLLIERFVSLAIDAYPLVHHENEEYQKVFRVYLEYIKKLYNDLGNQILDSYSVILSTCDGLKFTDESFYKNMYLKSAVMQSVGACVVCSSQTSLRCGSCIRKPLLCCKCCYDHVMATNHKYVLSVSPYVCNAPNCDVSDVTKLYLGGMSYYCENHKPHYSFKLVMNGMVFGLYKQSCTGSPYIDDFNKIASCKWTEVDDYVLANECIERLKLFAAETQKATEEAFKQSYASATIQEIVSDREIILCWETGKVKPPLNKNYVFTGYHFTSTGKTVLGEYVFDKSELTNGVYYRATTTYKLSIGDVFVLTSHSVANLSAPTLVPQENYASIRFSSVYSVPLLFQTNVANYQHIGMKRYCTVQGPPGTGKSHLAIGLAVYYYTARVVYTAASHAAVDALCEKAYKFLNINDCTRIIPAKVRVDCYDKFKINDTTCKYVFTTINALPELVTDIVVVDEVSMLTNYELSVINARVKAKHYVYIGDPAQLPAPRVLLSKGSLEPRHFNSITKIMCCLGPDIFLGNCYRCPKEIVETVSALVYDNKLKAKNDNSSLCFKVYFKGQTTHESSSAVNIQQIYLISKFLKANPVWNSAVFISPYNSQNYVAKRILGVQTQTVDSAQGSEYDYVIYSQTAETAHSINVNRFNVAITRAKKGIFCVMSNMQLFESLNFITLPLDKIQNQTLSRLHCTTNLFKDCSKNFLGYHPAHAPSFLSVDDKYKVNEDLAVCLNICEPVLTYSRLISLMGFKLDLTLDGYSKFFITKDEAIKRVRGWVGFDVEGAHATRDNIGTNFPLQIGFSTGVDFVVEATGLFAERDCYIFKRTVAKAPPGDNFKHLIPLMSKGQKWDVVRIRIVQMLSDYLLDLSDSVVFITWSASFELTCLRYFAKLGRELNCDVCPNRATCYNSRTGYYGCWRHSYTCDYVYNPLIVDIQQWGYTGSLTSNHDIICNVHKGAHVASSDAIMTRCLAIYDCFCKSVNWNLEYPIISNEVSINTSCRLLQRVMLKAAMLCNRYNLCYDIGNPKGIACVKDYEFKFYDASPVVKSVKQLFYVYDVHKDNFKDGLCMFWNCNVDKYPSNSIVCRFDTRVLNKLNLPGCNGGSLYVNKHAFHTNPFTRTVFENLKPMPFFYYSDTPCVYVDGLESKQVDYVPLRSATCITRCNLGGAVCSKHAEDYCKYLESYNVATTAGFTFWVYKTFDFYNLWNTFTMLQSLENVIYNLVNAGHYDGRIGELPCAIMNDKVVVKINNVDTVIFKNNTSLPTNIAVELFTKRSIRHHPELKILRNLNIDICWKHVLWDYVKDSLFCSSTYGVCKYTDLNFIENLNVLFDGRDNGALEAFRKARNGVFISTGKLSSLSMIKGPQRADLNGVIVDKVGELNVEFWFAMRKDGDDVIFSRADSLSPSHYWSPQGNLGGNCAGNASGNDALARFTIFTQSRVLSTFEPRSDLERDFIDMEDSLFIAKYGLEDYAFDHIVYGSFNYKVIGGLHLLIGLFRRLKKSNLVIQEFLQYDSSIHSYFITDQECGSSKSVCTVIDLLLDDFVVIVKSLNLNCVSKVVNINVDFKDFQFMLWCNDNKIMTFYPKMQATSDWKPGYSMPVLYKYLNVPLERVSLWNYGKAINLPTGCMMNVAKYTQLCQYLNTTTLAVPVNMRVLHLGAGSDKEVAPGSAVLRQWLPSGSILVDNDLNPFVSDSLVTYFGDCMTLPFDCHWDLIISDMYDPLTKNIGDYNVSKDGFFTYICYLIRDKLSLGGSVAIKITEFSWNADLYKLMSYFAFWTVFCTNVNASSSEGFLIGINYLGKSCFEIDGNVMHANYLFWRNSTTWNGGAYSLFDMSKFSLKLAGTAVVNLRPDQLNDLVYSLIERGKLLVRDTRKEIFVGDSLVNTC.

The region spanning 54–174 (YDNHVKIDCR…HKWFQFCRLY (121 aa)) is the CoV Nsp1 globular domain. One can recognise a BetaCoV Nsp1 C-terminal domain in the interval 192–222 (FSVEDAYAEVHAEPKGKYSQKAYALLRQYRG). The CoV Nsp2 N-terminal domain occupies 226–488 (VLFVDQYGCD…LITHALYLDY (263 aa)). Cys365, Cys370, Cys386, and Cys389 together coordinate Zn(2+). The segment at 365 to 389 (CFNDNCDFYGWVSGNMMDGFSCPLC) is C4. The 189-residue stretch at 493–681 (CGNLEQNHIL…VNKFYTFFKL (189 aa)) folds into the CoV Nsp2 middle domain. The 113-residue stretch at 697–809 (LKTINGLVCI…LDQAWRFPCA (113 aa)) folds into the CoV Nsp2 C-terminal domain. The region spanning 811-923 (RKVNFNEKPV…MYCTFAIEDV (113 aa)) is the Ubiquitin-like 1 domain. A run of 11 repeats spans residues 945 to 954 (NDDEDVVTGD), 955 to 964 (NDDEDVVTGD), 965 to 974 (NDDEDVVTGD), 975 to 984 (NDDEDVVTGD), 985 to 994 (NDDEDVVTGD), 995 to 1004 (NDDEDVVTGD), 1005 to 1014 (NDDEDVVTGD), 1015 to 1024 (NDDEDVVTGD), 1025 to 1034 (NDDEDVVTGD), 1035 to 1044 (NDDEDVVTGD), and 1045 to 1054 (NDDEDVVTGD). The tract at residues 945 to 1054 (NDDEDVVTGD…NDDEDVVTGD (110 aa)) is 11 X 10 AA tandem repeat of N-[DN]-D-E-D-V-V-T-G-D. A disordered region spans residues 947–1036 (DEDVVTGDND…DEDVVTGDND (90 aa)). In terms of domain architecture, Peptidase C16 1 spans 1093-1343 (VFNDVYNDAL…VCFVKGDIIN (251 aa)). The active-site For PL1-PRO activity is the Cys1131. Zn(2+)-binding residues include Cys1208, Cys1211, Cys1234, and Cys1236. A C4-type 1 zinc finger spans residues 1208–1236 (CLKCGFSFDLNGLDAVFFYGDIVSHVCKC). Residues His1282 and Asp1293 each act as for PL1-PRO activity in the active site. Residues 1321–1492 (ELAQLYGLCI…IIQKCQITSV (172 aa)) enclose the Macro domain. Residues 1548-1619 (NDVRDYLLSK…TVNQVCVLLA (72 aa)) form the DPUP domain. The 56-residue stretch at 1619 to 1674 (AKKIDVLLTVDGVNFKSISLTVGEVFGKILGNVFCDGIDVTKLKCSDFYADKILYQ) folds into the Ubiquitin-like 2 domain. The 261-residue stretch at 1688–1948 (SSFGFDQQQL…MVAYNPDLSQ (261 aa)) folds into the Peptidase C16 2 domain. Catalysis depends on Cys1727, which acts as the For PL2-PRO activity. Zn(2+) contacts are provided by Cys1805, Cys1807, Cys1839, and Cys1841. The C4-type 2 zinc finger occupies 1805 to 1841 (CDCGIKQESRVGVDAVMHFGTLAKTDLFNGYKIGCNC). Catalysis depends on for PL2-PRO activity residues His1884 and Asp1898. Residues 1962–2063 (IKAQFKPFAK…TYFNKPSFKS (102 aa)) enclose the Nucleic acid-binding domain. The region spanning 2078–2227 (ESQGNVVTSV…NDKTIFYTTE (150 aa)) is the G2M domain. 3 helical membrane-spanning segments follow: residues 2196–2216 (AIEFYGFLKWLFIYVFSLLHF), 2257–2277 (FLVVATVFLFWFNFLYINVIF), and 2288–2308 (FPIFVGRIVMWIKATFGLVTI). The HD1 stretch occupies residues 2196 to 2433 (AIEFYGFLKW…FVLLRFYIVV (238 aa)). The region spanning 2293–2354 (GRIVMWIKAT…AIDFVQYEVD (62 aa)) is the 3Ecto domain. 2 cysteine pairs are disulfide-bonded: Cys2309-Cys2333 and Cys2324-Cys2330. 2 helical membrane passes run 2371–2391 (LVIGYSLYTVWFYPLFCLIGL) and 2413–2433 (FIVFVANMLPAFVLLRFYIVV). The tract at residues 2441–2531 (GFIRHIVYGC…ELKRPVNPTD (91 aa)) is Y1. In terms of domain architecture, CoV Nsp3 Y spans 2441 to 2808 (GFIRHIVYGC…LTTPFSLKGG (368 aa)). Zn(2+)-binding residues include His2445, Cys2450, Cys2455, Cys2458, Cys2491, His2494, Cys2498, and Cys2501. The tract at residues 2445–2458 (HIVYGCNKAGCLFC) is ZF1. A ZF2 region spans residues 2491 to 2501 (CVKHQWNCFNC). The segment at 2532–2624 (ASHYVVTDIK…LVDKKLITTA (93 aa)) is Y2. The tract at residues 2532-2808 (ASHYVVTDIK…LTTPFSLKGG (277 aa)) is coV-Y. A Y3 region spans residues 2625-2707 (CNGISVTQTM…KSMISAVAAG (83 aa)). A Y4 region spans residues 2708–2808 (LEFTDENYNN…LTTPFSLKGG (101 aa)). 5 helical membrane passes run 2814 to 2834 (LLYILFFISLICFILLWALLP), 3089 to 3109 (ASSIFGAILAIVVVLVFYYLI), 3121 to 3141 (VVVINVIVWCINFLMLFVFQV), 3148 to 3168 (VYACFYFYVTLYFPSEISVIM), and 3173 to 3193 (IVMYGAIMPFWFCVTYVAMVI). The segment at 2814–3193 (LLYILFFISL…FCVTYVAMVI (380 aa)) is HD2. One can recognise a Nsp4C domain in the interval 3207–3304 (IGVNVCNDST…TASVSTSFLQ (98 aa)). The region spanning 3305 to 3607 (SGIVKMVSPT…YQQLAGVKLQ (303 aa)) is the Peptidase C30 domain. Residues His3345 and Cys3449 each act as for 3CL-PRO activity in the active site. 7 consecutive transmembrane segments (helical) span residues 3621-3641 (ILISTFLFSCIISAFVKWTIF), 3646-3666 (THMIGVTLCVLCFVSFMMLLV), 3671-3691 (FYLTMYIIPVLCTLFYVNYLV), 3714-3734 (FTYVYEVFYGCILCVFAIFIT), 3742-3762 (IFSLMFLVGRIVTLISMWYFG), 3770-3790 (LLFITAFLGTYTWTTILSLAI), and 3813-3833 (LILLSYLFIGYILSCYWGFFS). Residues 3621 to 3833 (ILISTFLFSC…ILSCYWGFFS (213 aa)) form an HD3 region. Positions 3895-3983 (SKLTDVKCAN…DYVQDSTVLQ (89 aa)) constitute a RdRp Nsp7 cofactor domain. One can recognise a RdRp Nsp8 cofactor domain in the interval 3984–4180 (ALQSEFVNMA…YNEVANAVMQ (197 aa)). Residues 4181–4290 (NNELMPHKLK…GTLSSTIRLQ (110 aa)) form the Nsp9 ssRNA-binding domain. Residues 4291-4428 (AGVATEYAAN…CVGSGVAVQS (138 aa)) enclose the ExoN/MTase coactivator domain. Residues Cys4364, Cys4367, His4373, Cys4380, Cys4406, Cys4409, Cys4417, and Cys4419 each contribute to the Zn(2+) site. Zinc fingers lie at residues 4364-4380 (CIYCRARVEHPDVDGLC) and 4406-4419 (CQVCGFWRDGSCSC). The NiRAN domain maps to 4433–4688 (FLNRVRGTSV…DCELFVNDSY (256 aa)). 2 residues coordinate Mn(2+): Asn4636 and Asp4645. A Nsp12 Interface domain is found at 4689–4787 (RQFDLVQYDF…MNLDVDTHRY (99 aa)). Positions 4718, 4724, 4729, 4733, and 4910 each coordinate Zn(2+). In terms of domain architecture, Nsp12 RNA-dependent RNA polymerase spans 4788-5355 (RLSLKDLLLY…NMYLKSAVMQ (568 aa)). The tract at residues 4790 to 5004 (SLKDLLLYAA…HQKCLKSIAA (215 aa)) is rdRp Fingers N-ter. The segment at 5005 to 5043 (TRGVPVVIGTTKFYGGWDDMLRHLIKDVDNPVLMGWDYP) is rdRp Palm N-ter. The 163-residue stretch at 5035–5197 (PVLMGWDYPK…CYNSDYASKG (163 aa)) folds into the RdRp catalytic domain. Residues 5044-5102 (KCDRAMPNILRIVSSLVLARKHEFCCSHGDRFYRLANECAQVLSEIVMCGGCYYVKPGG) are rdRp Fingers C-ter. Residues His5065, Cys5068, and Cys5069 each contribute to the Zn(2+) site. A rdRp Palm C-ter region spans residues 5103-5238 (TSSGDATTAF…TNGPHEFCSQ (136 aa)). Residues Ser5182, Asp5183, and Asp5184 contribute to the active site. Positions 5239-5355 (HTMLVKIDGD…NMYLKSAVMQ (117 aa)) are rdRp Thumb. The 113-residue stretch at 5356–5468 (SVGACVVCSS…DDFNKIASCK (113 aa)) folds into the CV ZBD domain. Zn(2+) contacts are provided by Cys5360, Cys5363, Cys5371, Cys5374, Cys5381, Cys5384, His5388, His5394, Cys5405, Cys5410, Cys5427, and His5430. A (+)RNA virus helicase ATP-binding domain is found at 5611-5792 (SVPLLFQTNV…MCCLGPDIFL (182 aa)). An ATP-binding site is contributed by 5636–5643 (GPPGTGKS). The 170-residue stretch at 5793–5962 (GNCYRCPKEI…TLSRLHCTTN (170 aa)) folds into the (+)RNA virus helicase C-terminal domain. The ExoN domain occupies 6029–6244 (FFITKDEAIK…RCLAIYDCFC (216 aa)). Active-site residues include Asp6047, Glu6049, and Glu6148. 7 residues coordinate Zn(2+): Cys6164, Cys6167, Cys6183, His6186, His6214, Cys6218, and His6221. Active-site residues include His6225 and Asp6230. Cys6236 is a Zn(2+) binding site. Positions 6253 to 6479 (YPIISNEVSI…NLWNTFTMLQ (227 aa)) constitute an N7-MTase domain. Position 6288-6294 (6288-6294 (DIGNPKG)) interacts with S-adenosyl-L-methionine. The gpppA-binding stretch occupies residues 6366–6380 (CNGGSLYVNKHAFHT). Positions 6404, 6425, 6436, and 6439 each coordinate Zn(2+). Residues 6480 to 6540 (SLENVIYNLV…NIAVELFTKR (61 aa)) form the Nsp15 N-terminal oligomerization domain. The region spanning 6541 to 6661 (SIRHHPELKI…FAMRKDGDDV (121 aa)) is the AV-Nsp11N/CoV-Nsp15M domain. The NendoU domain occupies 6711-6850 (EPRSDLERDF…NDNKIMTFYP (140 aa)). Residues His6741, His6756, Lys6796, Lys6899, Asp6983, Lys7023, and Glu7056 contribute to the active site. The Nidovirus-type SAM-dependent 2'-O-MTase domain occupies 6855–7149 (TSDWKPGYSM…KEIFVGDSLV (295 aa)).

The protein belongs to the coronaviruses polyprotein 1ab family. In terms of assembly, interacts with host PHB and PHB2. As to quaternary structure, interacts with papain-like protease nsp3 and non-structural protein 6. Monomer. Homodimer. Only the homodimer shows catalytic activity. In terms of assembly, interacts with nsp8 and nsp12 to form the replication-transcription complex (RTC): nsp12, nsp7, two subunits of nsp8, and up to two subunits of nsp13. As to quaternary structure, interacts with nsp7, nsp13 and nsp12 to form the replication-transcription complex (RTC): nsp12, nsp7, two subunits of nsp8, and up to two subunits of nsp13. Interacts with nsp12. In terms of assembly, interacts with proofreading exoribonuclease nsp14 and 2'-O-methyltransferase nsp16; these interactions enhance nsp14 and nsp16 enzymatic activities. As to quaternary structure, interacts with nsp7 and nsp8 to form the replication-transcription complex (RTC): nsp12, nsp7, two subunits of nsp8, and up to two subunits of nsp13. Interacts with nsp9. Interacts with nsp8 to form the replication-transcription complex (RTC): nsp12, nsp7, two subunits of nsp8, and up to two subunits of nsp13. It depends on Mn(2+) as a cofactor. Mg(2+) serves as cofactor. In terms of processing, specific enzymatic cleavages in vivo by its own proteases yield mature proteins. 3CL-PRO and PL-PRO proteinases are autocatalytically processed.

Its subcellular location is the host membrane. The protein resides in the host cytoplasm. The protein localises to the host perinuclear region. It localises to the host endoplasmic reticulum-Golgi intermediate compartment. The catalysed reaction is RNA(n) + a ribonucleoside 5'-triphosphate = RNA(n+1) + diphosphate. The enzyme catalyses ATP + H2O = ADP + phosphate + H(+). It carries out the reaction Thiol-dependent hydrolysis of ester, thioester, amide, peptide and isopeptide bonds formed by the C-terminal Gly of ubiquitin (a 76-residue protein attached to proteins as an intracellular targeting signal).. It catalyses the reaction a 5'-end (N(7)-methyl 5'-triphosphoguanosine)-ribonucleoside in mRNA + S-adenosyl-L-methionine = a 5'-end (N(7)-methyl 5'-triphosphoguanosine)-(2'-O-methyl-ribonucleoside) in mRNA + S-adenosyl-L-homocysteine + H(+). The catalysed reaction is uridylyl-uridylyl-ribonucleotide-RNA = a 3'-end uridylyl-2',3'-cyclophospho-uridine-RNA + a 5'-end dephospho-ribonucleoside-RNA. The enzyme catalyses a 5'-end diphospho-ribonucleoside in mRNA + GTP + H(+) = a 5'-end (5'-triphosphoguanosine)-ribonucleoside in mRNA + diphosphate. It carries out the reaction a 5'-end (5'-triphosphoguanosine)-ribonucleoside in mRNA + S-adenosyl-L-methionine = a 5'-end (N(7)-methyl 5'-triphosphoguanosine)-ribonucleoside in mRNA + S-adenosyl-L-homocysteine. In terms of biological role, the replicase polyprotein of coronaviruses is a multifunctional protein: it contains the activities necessary for the transcription of negative stranded RNA, leader RNA, subgenomic mRNAs and progeny virion RNA as well as proteinases responsible for the cleavage of the polyprotein into functional products. Functionally, inhibits host translation by interacting with the 40S ribosomal subunit. The nsp1-40S ribosome complex further induces an endonucleolytic cleavage near the 5'UTR of host mRNAs, targeting them for degradation. Viral mRNAs are not susceptible to nsp1-mediated endonucleolytic RNA cleavage thanks to the presence of a 5'-end leader sequence and are therefore protected from degradation. By suppressing host gene expression, nsp1 facilitates efficient viral gene expression in infected cells and evasion from host immune response. May play a role in the modulation of host cell survival signaling pathway by interacting with host PHB and PHB2. Indeed, these two proteins play a role in maintaining the functional integrity of the mitochondria and protecting cells from various stresses. Its function is as follows. Responsible for the cleavages located at the N-terminus of the replicase polyprotein. In addition, PL-PRO possesses a deubiquitinating/deISGylating activity and processes both 'Lys-48'- and 'Lys-63'-linked polyubiquitin chains from cellular substrates. Participates together with nsp4 in the assembly of virally-induced cytoplasmic double-membrane vesicles necessary for viral replication. Antagonizes innate immune induction of type I interferon by blocking the phosphorylation, dimerization and subsequent nuclear translocation of host IRF3. Also prevents host NF-kappa-B signaling. In terms of biological role, participates in the assembly of virally-induced cytoplasmic double-membrane vesicles necessary for viral replication. Functionally, cleaves the C-terminus of replicase polyprotein at 11 sites. Recognizes substrates containing the core sequence [ILMVF]-Q-|-[SGACN]. Also able to bind an ADP-ribose-1''-phosphate (ADRP). Plays a role in the initial induction of autophagosomes from host endoplasmic reticulum. Later, limits the expansion of these phagosomes that are no longer able to deliver viral components to lysosomes. Its function is as follows. Forms a hexadecamer with nsp8 (8 subunits of each) that may participate in viral replication by acting as a primase. Alternatively, may synthesize substantially longer products than oligonucleotide primers. In terms of biological role, forms a hexadecamer with nsp7 (8 subunits of each) that may participate in viral replication by acting as a primase. Alternatively, may synthesize substantially longer products than oligonucleotide primers. Functionally, forms a primer, NSP9-pU, which is utilized by the polymerase for the initiation of RNA chains. Interacts with ribosome signal recognition particle RNA (SRP). Together with NSP8, suppress protein integration into the cell membrane, thereby disrupting host immune defenses. Plays a pivotal role in viral transcription by stimulating both nsp14 3'-5' exoribonuclease and nsp16 2'-O-methyltransferase activities. Therefore plays an essential role in viral mRNAs cap methylation. Its function is as follows. RNA-directed RNA polymerase that catalyzes the transcription of viral genomic and subgenomic RNAs. Acts in complex with nsp7 and nsp8 to transcribe both the minus and positive strands of genomic RNA. The kinase-like NiRAN domain of NSP12 attaches one or more nucleotides to the amino terminus of NSP9, forming a covalent RNA-protein intermediate that serves as transcription/replication primer. Subgenomic RNAs (sgRNAs) are formed by discontinuous transcription: The polymerase has the ability to pause at transcription-regulating sequences (TRS) and jump to the leader TRS, resulting in a major deletion. This creates a series of subgenomic RNAs that are replicated, transcribed and translated. In addition, Nsp12 is a subunit of the viral RNA capping enzyme that catalyzes the RNA guanylyltransferase reaction for genomic and sub-genomic RNAs. Subsequently, the NiRAN domain transfers RNA to GDP, and forms the core cap structure GpppA-RNA. In terms of biological role, multi-functional protein with a zinc-binding domain in N-terminus displaying RNA and DNA duplex-unwinding activities with 5' to 3' polarity. Activity of helicase is dependent on magnesium. Functionally, plays a role in viral RNA synthesis through two distinct activities. The N7-guanine methyltransferase activity plays a role in the formation of the cap structure GpppA-RNA. The proofreading exoribonuclease reduces the sensitivity of the virus to RNA mutagens during replication. This activity acts on both ssRNA and dsRNA in a 3'-5' direction. Plays a role in viral transcription/replication and prevents the simultaneous activation of host cell dsRNA sensors, such as MDA5/IFIH1, OAS, and PKR. Acts by degrading the 5'-polyuridines generated during replication of the poly(A) region of viral genomic and subgenomic RNAs. Catalyzes a two-step reaction in which a 2'3'-cyclic phosphate (2'3'-cP) is first generated by 2'-O transesterification, which is then hydrolyzed to a 3'-phosphate (3'-P). If not degraded, poly(U) RNA would hybridize with poly(A) RNA tails and activate host dsRNA sensors. Its function is as follows. Methyltransferase that mediates mRNA cap 2'-O-ribose methylation to the 5'-cap structure of viral mRNAs. N7-methyl guanosine cap is a prerequisite for binding of nsp16. Therefore plays an essential role in viral mRNAs cap methylation which is essential to evade immune system. This Homo sapiens (Human) protein is Replicase polyprotein 1ab (rep).